A 208-amino-acid chain; its full sequence is Dephospho-CoA kinase (208 aa).

A DPCK domain is found at 3 to 208 (EIGLTGGIGS…ALSAAGVTQA (206 aa)). 11 to 16 (GSGKTR) is a binding site for ATP.

It belongs to the CoaE family.

It is found in the cytoplasm. It catalyses the reaction 3'-dephospho-CoA + ATP = ADP + CoA + H(+). It participates in cofactor biosynthesis; coenzyme A biosynthesis; CoA from (R)-pantothenate: step 5/5. Functionally, catalyzes the phosphorylation of the 3'-hydroxyl group of dephosphocoenzyme A to form coenzyme A. The chain is Dephospho-CoA kinase from Cupriavidus pinatubonensis (strain JMP 134 / LMG 1197) (Cupriavidus necator (strain JMP 134)).